The sequence spans 335 residues: Lipase chaperone (335 aa).

Residues 7-23 (LLPLAIALGLGFFIARP) form a helical membrane-spanning segment.

Belongs to the lipase chaperone family.

The protein resides in the cell inner membrane. Its function is as follows. May be involved in the folding of the extracellular lipase during its passage through the periplasm. The chain is Lipase chaperone (lifO) from Ectopseudomonas mendocina (Pseudomonas mendocina).